Here is a 331-residue protein sequence, read N- to C-terminus: Ketol-acid reductoisomerase (NADP(+)) (331 aa).

Positions 2-182 (AKLFYDSDAD…GGTRAGILET (181 aa)) constitute a KARI N-terminal Rossmann domain. NADP(+) is bound by residues 25–28 (YGSQ), Ser51, Ser53, and 83–86 (DEFQ). Residue His108 is part of the active site. NADP(+) is bound at residue Gly134. The 146-residue stretch at 183–328 (NFKEETETDL…KTLRSMFSWL (146 aa)) folds into the KARI C-terminal knotted domain. Residues Asp191, Glu195, Glu227, and Glu231 each contribute to the Mg(2+) site. A substrate-binding site is contributed by Ser252.

It belongs to the ketol-acid reductoisomerase family. Requires Mg(2+) as cofactor.

The enzyme catalyses (2R)-2,3-dihydroxy-3-methylbutanoate + NADP(+) = (2S)-2-acetolactate + NADPH + H(+). It carries out the reaction (2R,3R)-2,3-dihydroxy-3-methylpentanoate + NADP(+) = (S)-2-ethyl-2-hydroxy-3-oxobutanoate + NADPH + H(+). The protein operates within amino-acid biosynthesis; L-isoleucine biosynthesis; L-isoleucine from 2-oxobutanoate: step 2/4. It functions in the pathway amino-acid biosynthesis; L-valine biosynthesis; L-valine from pyruvate: step 2/4. Involved in the biosynthesis of branched-chain amino acids (BCAA). Catalyzes an alkyl-migration followed by a ketol-acid reduction of (S)-2-acetolactate (S2AL) to yield (R)-2,3-dihydroxy-isovalerate. In the isomerase reaction, S2AL is rearranged via a Mg-dependent methyl migration to produce 3-hydroxy-3-methyl-2-ketobutyrate (HMKB). In the reductase reaction, this 2-ketoacid undergoes a metal-dependent reduction by NADPH to yield (R)-2,3-dihydroxy-isovalerate. This is Ketol-acid reductoisomerase (NADP(+)) from Prochlorococcus marinus (strain NATL2A).